We begin with the raw amino-acid sequence, 191 residues long: MHALEQKILTEGIVLSDQVLKVDAFLNHQIDPVLMQQIGKEFAARFKDAGITKIITIEASGIAPAIMAGLELGVPVIFARKYQSLTLKDDLYRAKVFSFTKQTESTIAISNKHINSSDKALVIDDFLANGQAALGLIDLIHQANAEVVGVGIVIEKSFQPGRDLLLEKGYRVESLARVQSLADGTVTFVKE.

2 residues coordinate xanthine: Leu20 and Asn27. 128-132 (ANGQA) serves as a coordination point for 5-phospho-alpha-D-ribose 1-diphosphate. Position 156 (Lys156) interacts with xanthine.

This sequence belongs to the purine/pyrimidine phosphoribosyltransferase family. Xpt subfamily. Homodimer.

It localises to the cytoplasm. The catalysed reaction is XMP + diphosphate = xanthine + 5-phospho-alpha-D-ribose 1-diphosphate. It participates in purine metabolism; XMP biosynthesis via salvage pathway; XMP from xanthine: step 1/1. Functionally, converts the preformed base xanthine, a product of nucleic acid breakdown, to xanthosine 5'-monophosphate (XMP), so it can be reused for RNA or DNA synthesis. This chain is Xanthine phosphoribosyltransferase, found in Acinetobacter baumannii (strain AB307-0294).